Reading from the N-terminus, the 108-residue chain is Small ribosomal subunit protein bS6 (108 aa).

It belongs to the bacterial ribosomal protein bS6 family.

Binds together with bS18 to 16S ribosomal RNA. The chain is Small ribosomal subunit protein bS6 from Dichelobacter nodosus (strain VCS1703A).